The chain runs to 257 residues: Thiazole synthase (257 aa).

Residue lysine 96 is the Schiff-base intermediate with DXP of the active site. 1-deoxy-D-xylulose 5-phosphate-binding positions include glycine 157, 184–185 (AG), and 206–207 (NT).

This sequence belongs to the ThiG family. In terms of assembly, homotetramer. Forms heterodimers with either ThiH or ThiS.

The protein resides in the cytoplasm. It carries out the reaction [ThiS sulfur-carrier protein]-C-terminal-Gly-aminoethanethioate + 2-iminoacetate + 1-deoxy-D-xylulose 5-phosphate = [ThiS sulfur-carrier protein]-C-terminal Gly-Gly + 2-[(2R,5Z)-2-carboxy-4-methylthiazol-5(2H)-ylidene]ethyl phosphate + 2 H2O + H(+). The protein operates within cofactor biosynthesis; thiamine diphosphate biosynthesis. Its function is as follows. Catalyzes the rearrangement of 1-deoxy-D-xylulose 5-phosphate (DXP) to produce the thiazole phosphate moiety of thiamine. Sulfur is provided by the thiocarboxylate moiety of the carrier protein ThiS. In vitro, sulfur can be provided by H(2)S. In Bartonella bacilliformis (strain ATCC 35685 / KC583 / Herrer 020/F12,63), this protein is Thiazole synthase.